Here is a 177-residue protein sequence, read N- to C-terminus: Large ribosomal subunit protein uL6 (177 aa).

The protein belongs to the universal ribosomal protein uL6 family. As to quaternary structure, part of the 50S ribosomal subunit.

Functionally, this protein binds to the 23S rRNA, and is important in its secondary structure. It is located near the subunit interface in the base of the L7/L12 stalk, and near the tRNA binding site of the peptidyltransferase center. The chain is Large ribosomal subunit protein uL6 from Brucella abortus (strain S19).